We begin with the raw amino-acid sequence, 305 residues long: Oligopeptide transport ATP-binding protein OppF (305 aa).

The region spanning 6 to 251 (LEIKHLKQHF…PLHPYTKSLL (246 aa)) is the ABC transporter domain. 42–49 (GESGCGKS) contacts ATP.

Belongs to the ABC transporter superfamily. The complex is composed of two ATP-binding proteins (OppD and OppF), two transmembrane proteins (OppB and OppC) and a solute-binding protein (OppA).

It localises to the cell membrane. It carries out the reaction a [peptide](out) + ATP + H2O = a [peptide](in) + ADP + phosphate + H(+). Part of the ABC transporter complex OppABCDF involved in the uptake of oligopeptides. Probably responsible for energy coupling to the transport system. Required for genetic competence but not for peptide transport or for sporulation. The chain is Oligopeptide transport ATP-binding protein OppF from Bacillus subtilis (strain 168).